We begin with the raw amino-acid sequence, 433 residues long: Aspartate--tRNA(Asp/Asn) ligase (433 aa).

Residue glutamate 167 participates in L-aspartate binding. The aspartate stretch occupies residues 189–192 (QLFK). Arginine 211 contributes to the L-aspartate binding site. ATP is bound by residues 211–213 (RAE), 219–221 (RHL), and glutamate 356. Residues glutamate 356 and serine 359 each coordinate Mg(2+). The L-aspartate site is built by serine 359 and arginine 363. 404–407 (GGER) contacts ATP.

It belongs to the class-II aminoacyl-tRNA synthetase family. Type 2 subfamily. Homodimer. It depends on Mg(2+) as a cofactor.

The protein localises to the cytoplasm. The catalysed reaction is tRNA(Asx) + L-aspartate + ATP = L-aspartyl-tRNA(Asx) + AMP + diphosphate. Its function is as follows. Aspartyl-tRNA synthetase with relaxed tRNA specificity since it is able to aspartylate not only its cognate tRNA(Asp) but also tRNA(Asn). Reaction proceeds in two steps: L-aspartate is first activated by ATP to form Asp-AMP and then transferred to the acceptor end of tRNA(Asp/Asn). This Haloferax volcanii (Halobacterium volcanii) protein is Aspartate--tRNA(Asp/Asn) ligase.